A 316-amino-acid chain; its full sequence is Vacuolar membrane protein YNL058C (316 aa).

A disordered region spans residues 32 to 60 (KPTSSVVSETSSKSLPSLTSSAFSTSSGA). A helical membrane pass occupies residues 93–113 (VYIAVGAVIGAIFISILIWWL). Residues Ser148, Ser256, and Ser276 each carry the phosphoserine modification. A disordered region spans residues 240-304 (EEEERKLNLN…KAHKRQAPSM (65 aa)). Over residues 256-271 (SPERKEKKINSMEGYH) the composition is skewed to basic and acidic residues.

It belongs to the PRM5 family.

Its subcellular location is the vacuole membrane. This chain is Vacuolar membrane protein YNL058C, found in Saccharomyces cerevisiae (strain ATCC 204508 / S288c) (Baker's yeast).